The chain runs to 390 residues: Formamidopyrimidine-DNA glycosylase (390 aa).

Residue P2 is the Schiff-base intermediate with DNA of the active site. E3 (proton donor) is an active-site residue. The active-site Proton donor; for beta-elimination activity is the K60. DNA-binding residues include Y107, R126, K167, and N186. Residues 283–390 (AEKAAKVRPA…AGKKPKGRKS (108 aa)) are disordered. A compositionally biased stretch (acidic residues) spans 301–316 (DDGDGEEDEQETEKED). The span at 321-337 (SKKGQKPRGGRGKKPAS) shows a compositional bias: basic residues. A compositionally biased stretch (acidic residues) spans 343-355 (ESDDDGDDSEAEE). Residues 360–370 (PKGRGTKPAIK) show a composition bias toward basic residues.

Belongs to the FPG family. In terms of assembly, monomer. Expressed in leaves (at protein levels).

The protein resides in the nucleus. It carries out the reaction Hydrolysis of DNA containing ring-opened 7-methylguanine residues, releasing 2,6-diamino-4-hydroxy-5-(N-methyl)formamidopyrimidine.. It catalyses the reaction 2'-deoxyribonucleotide-(2'-deoxyribose 5'-phosphate)-2'-deoxyribonucleotide-DNA = a 3'-end 2'-deoxyribonucleotide-(2,3-dehydro-2,3-deoxyribose 5'-phosphate)-DNA + a 5'-end 5'-phospho-2'-deoxyribonucleoside-DNA + H(+). Involved in base excision repair of DNA damaged by oxidation or by mutagenic agents. Acts as a DNA glycosylase that recognizes and removes damaged bases. Can process efficiently 4,6-diamino-5-formamidopyrimidine (FapyA), 2,6-diamino-4- hydroxy-5-formamidopyrimidine (FapyG) and the further oxidation products of 8-oxoguanine (8-oxoG), such as guanidinohydantoin and spiroiminodihydantoin. Has marginal activity towards 8-oxoG. Has AP (apurinic/apyrimidinic) lyase activity. Cleaves the DNA backbone by beta-delta elimination to generate a single-strand break at the site of the removed base with both 3'- and 5'-phosphates. The polypeptide is Formamidopyrimidine-DNA glycosylase (FPG1) (Arabidopsis thaliana (Mouse-ear cress)).